A 293-amino-acid polypeptide reads, in one-letter code: 4-hydroxy-3-methylbut-2-enyl diphosphate reductase (293 aa).

[4Fe-4S] cluster is bound at residue cysteine 12. Positions 40 and 74 each coordinate (2E)-4-hydroxy-3-methylbut-2-enyl diphosphate. Positions 40 and 74 each coordinate dimethylallyl diphosphate. Residues histidine 40 and histidine 74 each coordinate isopentenyl diphosphate. Cysteine 96 contributes to the [4Fe-4S] cluster binding site. Histidine 128 is a (2E)-4-hydroxy-3-methylbut-2-enyl diphosphate binding site. Histidine 128 contacts dimethylallyl diphosphate. Histidine 128 contributes to the isopentenyl diphosphate binding site. Residue glutamate 130 is the Proton donor of the active site. Residue threonine 166 coordinates (2E)-4-hydroxy-3-methylbut-2-enyl diphosphate. Residue cysteine 202 coordinates [4Fe-4S] cluster. Positions 230, 231, 232, and 274 each coordinate (2E)-4-hydroxy-3-methylbut-2-enyl diphosphate. Residues serine 230, serine 231, asparagine 232, and serine 274 each contribute to the dimethylallyl diphosphate site. 4 residues coordinate isopentenyl diphosphate: serine 230, serine 231, asparagine 232, and serine 274.

This sequence belongs to the IspH family. The cofactor is [4Fe-4S] cluster.

The catalysed reaction is isopentenyl diphosphate + 2 oxidized [2Fe-2S]-[ferredoxin] + H2O = (2E)-4-hydroxy-3-methylbut-2-enyl diphosphate + 2 reduced [2Fe-2S]-[ferredoxin] + 2 H(+). It catalyses the reaction dimethylallyl diphosphate + 2 oxidized [2Fe-2S]-[ferredoxin] + H2O = (2E)-4-hydroxy-3-methylbut-2-enyl diphosphate + 2 reduced [2Fe-2S]-[ferredoxin] + 2 H(+). It participates in isoprenoid biosynthesis; dimethylallyl diphosphate biosynthesis; dimethylallyl diphosphate from (2E)-4-hydroxy-3-methylbutenyl diphosphate: step 1/1. Its pathway is isoprenoid biosynthesis; isopentenyl diphosphate biosynthesis via DXP pathway; isopentenyl diphosphate from 1-deoxy-D-xylulose 5-phosphate: step 6/6. Its function is as follows. Catalyzes the conversion of 1-hydroxy-2-methyl-2-(E)-butenyl 4-diphosphate (HMBPP) into a mixture of isopentenyl diphosphate (IPP) and dimethylallyl diphosphate (DMAPP). Acts in the terminal step of the DOXP/MEP pathway for isoprenoid precursor biosynthesis. This chain is 4-hydroxy-3-methylbut-2-enyl diphosphate reductase, found in Cytophaga hutchinsonii (strain ATCC 33406 / DSM 1761 / CIP 103989 / NBRC 15051 / NCIMB 9469 / D465).